The chain runs to 253 residues: Short-chain dehydrogenase/reductase ATR9 (253 aa).

8 residues coordinate NADP(+): S15, S16, I18, S38, N39, R42, D65, and K129. The Proton donor role is filled by S147. T194 lines the NADP(+) pocket.

It belongs to the short-chain dehydrogenases/reductases (SDR) family.

It functions in the pathway mycotoxin biosynthesis. Its function is as follows. Short-chain dehydrogenase/reductase; part of the core atranone cluster (CAC) which products are predicted to catalyze most or all steps of mycotoxin atranone synthesis, starting from geranylgeranyl pyrophosphate (GGPP). The initial cyclization of GGPP to dolabellane is probably performed by the terpene cyclase ATR13. The Baeyer-Villiger oxidation near the end of the atranone synthesis, which converts atranones D and E to atranones F and G is predicted to be catalyzed by the monooxygenase ATR8. Of the CAC's other predicted gene products, the reducing PKS ATR6 might synthesize a polyketide chain. This polyketide is probably transferred onto the atranone backbone by the polyketide transferase ATR5. Other predicted CAC products include 4 oxygenases (ATR2, ATR3, ATR4, and ATR14), 3 short-chain reductases (ATR7, ATR9, and ATR10), and a methyltransferase (ATR12). These may all be involved in the various steps of atranone biosynthesis, although their specific roles must await experimental determination. The protein is Short-chain dehydrogenase/reductase ATR9 of Stachybotrys chlorohalonatus (strain IBT 40285).